Here is a 225-residue protein sequence, read N- to C-terminus: MSTWMMFMFQESNSLYADNLVSFHNMVMIIVIMISTLTVYIIFDLFLNKFSNLYLLKNHNIEIIWMIVPIVILLIICFPSLKILYLIDEIVNPFFSIKSIGHQWYWSYEYPEFNNIEFYSYMLNYSDLNQFRLLETDNRMIIPMKIPLRLITTSTDVIHSWTVPSLGIKVDAVPGRINQLNLISKRPGIFFGQCSEICGMNHSFMPIMVESTSFKYFMNWIYKMN.

Over 1-25 (MSTWMMFMFQESNSLYADNLVSFHN) the chain is Mitochondrial intermembrane. Residues 26-47 (MVMIIVIMISTLTVYIIFDLFL) traverse the membrane as a helical segment. Residues 48 to 62 (NKFSNLYLLKNHNIE) are Mitochondrial matrix-facing. Residues 63–82 (IIWMIVPIVILLIICFPSLK) form a helical membrane-spanning segment. Topologically, residues 83-225 (ILYLIDEIVN…YFMNWIYKMN (143 aa)) are mitochondrial intermembrane. The Cu cation site is built by His159, Cys194, Glu196, Cys198, His202, and Met205. Mg(2+) is bound at residue Glu196.

The protein belongs to the cytochrome c oxidase subunit 2 family. In terms of assembly, component of the cytochrome c oxidase (complex IV, CIV), a multisubunit enzyme composed of a catalytic core of 3 subunits and several supernumerary subunits. The complex exists as a monomer or a dimer and forms supercomplexes (SCs) in the inner mitochondrial membrane with ubiquinol-cytochrome c oxidoreductase (cytochrome b-c1 complex, complex III, CIII). Requires Cu cation as cofactor.

The protein resides in the mitochondrion inner membrane. It catalyses the reaction 4 Fe(II)-[cytochrome c] + O2 + 8 H(+)(in) = 4 Fe(III)-[cytochrome c] + 2 H2O + 4 H(+)(out). In terms of biological role, component of the cytochrome c oxidase, the last enzyme in the mitochondrial electron transport chain which drives oxidative phosphorylation. The respiratory chain contains 3 multisubunit complexes succinate dehydrogenase (complex II, CII), ubiquinol-cytochrome c oxidoreductase (cytochrome b-c1 complex, complex III, CIII) and cytochrome c oxidase (complex IV, CIV), that cooperate to transfer electrons derived from NADH and succinate to molecular oxygen, creating an electrochemical gradient over the inner membrane that drives transmembrane transport and the ATP synthase. Cytochrome c oxidase is the component of the respiratory chain that catalyzes the reduction of oxygen to water. Electrons originating from reduced cytochrome c in the intermembrane space (IMS) are transferred via the dinuclear copper A center (CU(A)) of subunit 2 and heme A of subunit 1 to the active site in subunit 1, a binuclear center (BNC) formed by heme A3 and copper B (CU(B)). The BNC reduces molecular oxygen to 2 water molecules using 4 electrons from cytochrome c in the IMS and 4 protons from the mitochondrial matrix. The polypeptide is Cytochrome c oxidase subunit 2 (COII) (Apis florea (Dwarf honeybee)).